We begin with the raw amino-acid sequence, 332 residues long: Biotin synthase (332 aa).

The Radical SAM core domain occupies His53 to Arg282. The [4Fe-4S] cluster site is built by Cys71, Cys75, and Cys78. Residues Cys115, Cys147, Cys207, and Arg277 each contribute to the [2Fe-2S] cluster site.

It belongs to the radical SAM superfamily. Biotin synthase family. Homodimer. It depends on [4Fe-4S] cluster as a cofactor. [2Fe-2S] cluster is required as a cofactor.

The enzyme catalyses (4R,5S)-dethiobiotin + (sulfur carrier)-SH + 2 reduced [2Fe-2S]-[ferredoxin] + 2 S-adenosyl-L-methionine = (sulfur carrier)-H + biotin + 2 5'-deoxyadenosine + 2 L-methionine + 2 oxidized [2Fe-2S]-[ferredoxin]. The protein operates within cofactor biosynthesis; biotin biosynthesis; biotin from 7,8-diaminononanoate: step 2/2. Catalyzes the conversion of dethiobiotin (DTB) to biotin by the insertion of a sulfur atom into dethiobiotin via a radical-based mechanism. The protein is Biotin synthase of Bacillus cereus (strain B4264).